Consider the following 289-residue polypeptide: ATP synthase gamma chain (289 aa).

This sequence belongs to the ATPase gamma chain family. F-type ATPases have 2 components, CF(1) - the catalytic core - and CF(0) - the membrane proton channel. CF(1) has five subunits: alpha(3), beta(3), gamma(1), delta(1), epsilon(1). CF(0) has three main subunits: a, b and c.

It localises to the cell inner membrane. Functionally, produces ATP from ADP in the presence of a proton gradient across the membrane. The gamma chain is believed to be important in regulating ATPase activity and the flow of protons through the CF(0) complex. The polypeptide is ATP synthase gamma chain (Cereibacter sphaeroides (strain ATCC 17023 / DSM 158 / JCM 6121 / CCUG 31486 / LMG 2827 / NBRC 12203 / NCIMB 8253 / ATH 2.4.1.) (Rhodobacter sphaeroides)).